We begin with the raw amino-acid sequence, 249 residues long: 3-deoxy-D-manno-octulosonic acid kinase (249 aa).

Residue aspartate 175 is part of the active site.

It belongs to the protein kinase superfamily. KdkA/RfaP family.

The protein localises to the cell inner membrane. It carries out the reaction an alpha-Kdo-(2-&gt;6)-lipid IVA + ATP = a 4-O-phospho-alpha-Kdo-(2-&gt;6)-lipid IVA + ADP + H(+). It participates in bacterial outer membrane biogenesis; LPS core biosynthesis. Its function is as follows. Catalyzes the ATP-dependent phosphorylation of the 3-deoxy-D-manno-octulosonic acid (Kdo) residue in Kdo-lipid IV(A) at the 4-OH position. The sequence is that of 3-deoxy-D-manno-octulosonic acid kinase from Xanthomonas axonopodis pv. citri (strain 306).